The primary structure comprises 242 residues: UPF0173 metal-dependent hydrolase Rxyl_1261 (242 aa).

Belongs to the UPF0173 family.

The polypeptide is UPF0173 metal-dependent hydrolase Rxyl_1261 (Rubrobacter xylanophilus (strain DSM 9941 / JCM 11954 / NBRC 16129 / PRD-1)).